The primary structure comprises 258 residues: Imidazole glycerol phosphate synthase subunit HisF (258 aa).

Catalysis depends on residues Asp11 and Asp130.

This sequence belongs to the HisA/HisF family. Heterodimer of HisH and HisF.

Its subcellular location is the cytoplasm. The catalysed reaction is 5-[(5-phospho-1-deoxy-D-ribulos-1-ylimino)methylamino]-1-(5-phospho-beta-D-ribosyl)imidazole-4-carboxamide + L-glutamine = D-erythro-1-(imidazol-4-yl)glycerol 3-phosphate + 5-amino-1-(5-phospho-beta-D-ribosyl)imidazole-4-carboxamide + L-glutamate + H(+). The protein operates within amino-acid biosynthesis; L-histidine biosynthesis; L-histidine from 5-phospho-alpha-D-ribose 1-diphosphate: step 5/9. Functionally, IGPS catalyzes the conversion of PRFAR and glutamine to IGP, AICAR and glutamate. The HisF subunit catalyzes the cyclization activity that produces IGP and AICAR from PRFAR using the ammonia provided by the HisH subunit. The sequence is that of Imidazole glycerol phosphate synthase subunit HisF from Shigella sonnei (strain Ss046).